The sequence spans 54 residues: Ovomucoid (54 aa).

Positions 4-54 constitute a Kazal-like domain; that stretch reads VDCSEYPKPVCSPEYMPLCGSDSKTYNNKCDFCSAVVESNGTLTLGHFGKC. Intrachain disulfides connect Cys-6/Cys-36, Cys-14/Cys-33, and Cys-22/Cys-54. Asn-43 carries N-linked (GlcNAc...) asparagine glycosylation.

Its subcellular location is the secreted. In Casuarius casuarius (Southern cassowary), this protein is Ovomucoid.